The chain runs to 70 residues: Gas vesicle protein A (70 aa).

It belongs to the gas vesicle GvpA family. In terms of assembly, the gas vesicle shell is 2 nm thick and consists of a single layer of this protein. It forms helical ribs nearly perpendicular to the long axis of the vesicle.

The protein localises to the gas vesicle shell. Functionally, gas vesicles are hollow, gas filled proteinaceous nanostructures found in some microorganisms. During planktonic growth they allow positioning of the organism at a favorable depth for light or nutrient acquisition. GvpA forms the protein shell. This Ancylobacter aquaticus protein is Gas vesicle protein A.